Here is a 145-residue protein sequence, read N- to C-terminus: Sperm mitochondrial-associated cysteine-rich protein (145 aa).

4 positions are modified to phosphoserine: Ser38, Ser45, Ser113, and Ser131. The tract at residues 105–145 (CSSENKTESDSDGSGQTQDRGAQTQQSPQGGQGNWNQKKTK) is disordered. Residues 116–145 (DGSGQTQDRGAQTQQSPQGGQGNWNQKKTK) show a composition bias toward polar residues.

In terms of tissue distribution, testis. Selectively expressed in the spermatids of seminiferous tubules and in flagella of epididymal sperm.

The protein resides in the cytoplasm. The protein localises to the mitochondrion membrane. Involved in sperm motility. Its absence is associated with genetic background dependent male infertility. Infertility may be due to reduced sperm motility in the female reproductive tract and inability to penetrate the oocyte zona pellucida. The sequence is that of Sperm mitochondrial-associated cysteine-rich protein (Smcp) from Rattus norvegicus (Rat).